Consider the following 544-residue polypeptide: Histone-arginine methyltransferase CARMER (544 aa).

One can recognise an SAM-dependent MTase PRMT-type domain in the interval 150-459; sequence ASQYFQFYGY…QSYDVTIDLH (310 aa). Residues Q163, R172, G196, E218, E247, and T275 each coordinate S-adenosyl-L-methionine. The span at 505–520 shows a compositional bias: polar residues; it reads DTQQQQQGSRNSNSML. The tract at residues 505–527 is disordered; it reads DTQQQQQGSRNSNSMLNGGLSVN. R514 is subject to Asymmetric dimethylarginine; by autocatalysis.

The protein belongs to the class I-like SAM-binding methyltransferase superfamily. Protein arginine N-methyltransferase family. In terms of assembly, homodimer. The dimethylated protein is the major form.

Its subcellular location is the cytoplasm. It is found in the nucleus. The catalysed reaction is L-arginyl-[protein] + 2 S-adenosyl-L-methionine = N(omega),N(omega)-dimethyl-L-arginyl-[protein] + 2 S-adenosyl-L-homocysteine + 2 H(+). Its function is as follows. Methylates (mono- and asymmetric dimethylation) the guanidino nitrogens of arginyl residues in proteins. May methylate histone H3 at 'Arg-17' and activate transcription via chromatin remodeling. This Drosophila grimshawi (Hawaiian fruit fly) protein is Histone-arginine methyltransferase CARMER (Art4).